We begin with the raw amino-acid sequence, 587 residues long: Succinate dehydrogenase flavoprotein subunit (587 aa).

Residues 15-20, 39-54, and D223 contribute to the FAD site; these read GAGGAG and SKVF…AQGG. Position 47 is a tele-8alpha-FAD histidine (H47). Substrate contacts are provided by H244 and T256. Residue R288 is the Proton acceptor of the active site. Substrate is bound at residue H355. Residue E389 coordinates FAD. A substrate-binding site is contributed by R400. 405–406 contributes to the FAD binding site; the sequence is SL.

Belongs to the FAD-dependent oxidoreductase 2 family. FRD/SDH subfamily. In terms of assembly, part of an enzyme complex containing four subunits: a flavoprotein, an iron-sulfur protein, cytochrome b-556 and a hydrophobic protein. FAD is required as a cofactor.

It localises to the cell inner membrane. It carries out the reaction a quinone + succinate = fumarate + a quinol. Its pathway is carbohydrate metabolism; tricarboxylic acid cycle; fumarate from succinate (bacterial route): step 1/1. The polypeptide is Succinate dehydrogenase flavoprotein subunit (sdhA) (Coxiella burnetii (strain RSA 493 / Nine Mile phase I)).